The following is a 1178-amino-acid chain: DNA-directed RNA polymerase subunit beta' (1178 aa).

Cysteine 60, cysteine 62, cysteine 75, and cysteine 78 together coordinate Zn(2+). Mg(2+)-binding residues include aspartate 450, aspartate 452, and aspartate 454. 4 residues coordinate Zn(2+): cysteine 795, cysteine 869, cysteine 876, and cysteine 879.

This sequence belongs to the RNA polymerase beta' chain family. As to quaternary structure, the RNAP catalytic core consists of 2 alpha, 1 beta, 1 beta' and 1 omega subunit. When a sigma factor is associated with the core the holoenzyme is formed, which can initiate transcription. Requires Mg(2+) as cofactor. Zn(2+) is required as a cofactor.

It catalyses the reaction RNA(n) + a ribonucleoside 5'-triphosphate = RNA(n+1) + diphosphate. In terms of biological role, DNA-dependent RNA polymerase catalyzes the transcription of DNA into RNA using the four ribonucleoside triphosphates as substrates. In Clostridium botulinum (strain Langeland / NCTC 10281 / Type F), this protein is DNA-directed RNA polymerase subunit beta'.